Reading from the N-terminus, the 308-residue chain is UPF0282 protein M164_2122 (308 aa).

Belongs to the UPF0282 family.

This Saccharolobus islandicus (strain M.16.4 / Kamchatka #3) (Sulfolobus islandicus) protein is UPF0282 protein M164_2122.